The primary structure comprises 753 residues: 5-methyltetrahydropteroyltriglutamate--homocysteine methyltransferase (753 aa).

5-methyltetrahydropteroyltri-L-glutamate-binding positions include 17-20 (RELK) and Lys117. L-homocysteine is bound by residues 431–433 (IGS) and Glu484. L-methionine-binding positions include 431 to 433 (IGS) and Glu484. 5-methyltetrahydropteroyltri-L-glutamate-binding positions include 515-516 (RC) and Trp561. L-homocysteine is bound at residue Asp599. Asp599 is an L-methionine binding site. Glu605 contributes to the 5-methyltetrahydropteroyltri-L-glutamate binding site. Residues His641, Cys643, and Glu665 each contribute to the Zn(2+) site. The active-site Proton donor is the His694. Cys726 is a binding site for Zn(2+).

Belongs to the vitamin-B12 independent methionine synthase family. It depends on Zn(2+) as a cofactor.

It carries out the reaction 5-methyltetrahydropteroyltri-L-glutamate + L-homocysteine = tetrahydropteroyltri-L-glutamate + L-methionine. It participates in amino-acid biosynthesis; L-methionine biosynthesis via de novo pathway; L-methionine from L-homocysteine (MetE route): step 1/1. Functionally, catalyzes the transfer of a methyl group from 5-methyltetrahydrofolate to homocysteine resulting in methionine formation. The protein is 5-methyltetrahydropteroyltriglutamate--homocysteine methyltransferase of Escherichia coli O157:H7.